The chain runs to 1677 residues: LTIALVGSQQTKYEPSFSGSKTYQYKYEGVILTGLPEKGLARAGLKVHCKVEISEVAQKTYLLKILNPEIQEYNGIWPKAPFYPASKLTQALASQLTQPIKFQYRNGQVGDIFASEDVSDTVLNIQRGILNMLQLTIKTTQNVYGLQENGIAGICEASYVIQEDRKANKIIVTKSKDLNNCNEKIKMDIGMAYSHTCSNCRKIRKNTRGTAAYTYILKPTDTGTLITQATSQEVHQLTPFNEMTGAAITEARQKLVLEDAKVIHVTVPEQELKNRGSIQYQFASEILQTPIQLFKTRSPETKIKEVLQHLVQNNQQQVQSDAPSKFLQLTQLLRACTHENIEGIWRQYEKTQLYRRWILDALPAAATPTAFRFITQRIMKRDLTDAEAIQTLVTAMHLVQTNHQIVQMAAELVFDRANLKCPVLRKHAVLAYGSMVNRYCAETLNCREEALKPLHDFANDAISRAHEEETVLALKALGNAGQPSSIKRIQKCLPGFSSGASQLPVKIQVDAVMALRNIAKKEPGKVQELTMQLFMDHQLHSEVRMVASMVLLETRPSMALVATLAEALLKETSLQVASFTYSHMKAITRSTAPENHALSSACNVAVKLLSRKLDRLSYRYSKAMHMDTFKYPLMAGAAANIHIINNAASILPSAVVMKFQAYILSATADPLEIGLHTEGLQEVLMQNHEHIDQMPSAGKIQQIMKMLSGWKSVPSEKTLASAYIKLFGQEISFSRLDKKTIQEALQAVREPVERQTVIKRVVNQLERGAAAQLSKPLLVAEVRRILPTCIGLPMEMSLYVSAVTTADINVQAHITPSPTNDFNVAQLLNSNIVLHTDVTPSIAMHTIAVMGINTHVIQTGVELHVKARTTVPMKFTAKIDLKEKNFKIESEPCQQETEVLSLSAQAFAISRNVEDLDAAKKNPLLPEEAVRNILNEQFNSGTEDSNERERAGKFARPSAEMMSQELMNSGEHQNRKGAHATRSACAKAKNFGFEVCFEGKSENVAFLRDSPLYKIIGQHHCKIALKPSHSSEATIEKIQLELQTGNKAASKIIRVVAMQSLAEADEMKGNILKKLNKLLTVDGETQDSTLRGFKRRSSSSSSSSSSSSSSSSSSSSSSSQQSRMEKRMEQDKLTENLERDRDHMRGKQSKNKKQEWKNKQKKHHKQLPSSSSSSSSSSSGSNSSSSSSSSSSSSSRSHNHRNNTRTLSKSKRYQNNNNSSSSSGSSSSSEEIQKNPEIFAYRFRSHRDKLGFQNKRGRMSSSSSSSSSSSSQSTLNSKQDAKFLGDSSPPIFAFVARAVRSDGLQQGYQVAAYTDNRVSRPRVQLLATEIIEKSRWQICADAILASNYKAMALMRWGEECQDYKVAVSAVTGRLASHPSLQIKAKWSRIPRAAKQTQNILAEYVPGAAFMLGFSQKEQRNPSKQFKIILAVTSPNTIDTLIKAPKITLFKQAVQIPVQIPMEPSDAERRSPGLASIMNEIPFLIEEATKSKCVAQENKFITFDGVKFSYQMPGGCYHILAQDCRSKVRFMVMLKQASMSKNLRAVNAKIYNKDIDILPTTKGSVRLLINNNEIPLSQLPFTDSSGNIHIKRADEGVSVSAQQYGLESLYFDGKTVQVKVTSEMRGKTCGLCGHNDGERRKEFRMPDGRQARGPSVSPTPGLCLEKTATEAASFCVIM.

A signal peptide spans 1 to 8; the sequence is LTIALVGS. The Vitellogenin domain occupies 17 to 655; it reads FSGSKTYQYK…NAASILPSAV (639 aa). Disordered regions lie at residues 1089–1232 and 1252–1280; these read TLRG…SEEI and FQNK…SKQD. The segment covering 1098–1122 has biased composition (low complexity); sequence SSSSSSSSSSSSSSSSSSSSSSQQS. The span at 1123–1145 shows a compositional bias: basic and acidic residues; sequence RMEKRMEQDKLTENLERDRDHMR. Positions 1169-1196 are enriched in low complexity; that stretch reads SSSSSSSSSSSGSNSSSSSSSSSSSSSR. 4 N-linked (GlcNAc...) asparagine glycosylation sites follow: Asn1182, Asn1202, Asn1217, and Asn1218. Basic residues predominate over residues 1197-1212; that stretch reads SHNHRNNTRTLSKSKR. Low complexity-rich tracts occupy residues 1215–1229 and 1260–1273; these read NNNN…SSSS and SSSS…SSQS. One can recognise a VWFD domain in the interval 1490–1675; the sequence is SKCVAQENKF…TATEAASFCV (186 aa). 2 cysteine pairs are disulfide-bonded: Cys1492–Cys1631 and Cys1515–Cys1674. The segment covering 1636–1649 has biased composition (basic and acidic residues); the sequence is GERRKEFRMPDGRQ. Residues 1636–1659 form a disordered region; it reads GERRKEFRMPDGRQARGPSVSPTP.

Phosvitin, an egg yolk storage protein, is one of the most highly phosphorylated (10%) proteins in nature. Found in liver, testis and undifferentiated gonads of estrogen-treated fish. Not detected in the brain and spleen.

Precursor of the major egg-yolk proteins that are sources of nutrients during early development of oviparous organisms. The polypeptide is Vitellogenin (Acipenser transmontanus (White sturgeon)).